The chain runs to 342 residues: Delta-aminolevulinic acid dehydratase (342 aa).

Cys-133, Cys-135, and Cys-143 together coordinate Zn(2+). The active-site Schiff-base intermediate with substrate is the Lys-210. 5-aminolevulinate is bound by residues Arg-220 and Arg-232. Ser-254 is modified (phosphoserine). Lys-263 functions as the Schiff-base intermediate with substrate in the catalytic mechanism. Positions 290 and 329 each coordinate 5-aminolevulinate.

This sequence belongs to the ALAD family. Homooctamer. It depends on Zn(2+) as a cofactor.

It carries out the reaction 2 5-aminolevulinate = porphobilinogen + 2 H2O + H(+). Its pathway is porphyrin-containing compound metabolism; protoporphyrin-IX biosynthesis; coproporphyrinogen-III from 5-aminolevulinate: step 1/4. Its activity is regulated as follows. Inhibited by divalent lead ions. In terms of biological role, catalyzes an early step in the biosynthesis of tetrapyrroles. Binds two molecules of 5-aminolevulinate per subunit, each at a distinct site, and catalyzes their condensation to form porphobilinogen. The chain is Delta-aminolevulinic acid dehydratase (HEM2) from Saccharomyces cerevisiae (strain ATCC 204508 / S288c) (Baker's yeast).